The primary structure comprises 225 residues: Glycerol-3-phosphate acyltransferase (225 aa).

The next 6 helical transmembrane spans lie at 6–26, 55–75, 95–115, 135–155, 160–180, and 187–207; these read FFFF…LIIG, WGIV…IICL, DIAI…SIFN, PFIG…VGYA, IMAT…PGIT, and ILYF…HSNI.

The protein belongs to the PlsY family. In terms of assembly, probably interacts with PlsX.

It localises to the cell membrane. The catalysed reaction is an acyl phosphate + sn-glycerol 3-phosphate = a 1-acyl-sn-glycero-3-phosphate + phosphate. It participates in lipid metabolism; phospholipid metabolism. Catalyzes the transfer of an acyl group from acyl-phosphate (acyl-PO(4)) to glycerol-3-phosphate (G3P) to form lysophosphatidic acid (LPA). This enzyme utilizes acyl-phosphate as fatty acyl donor, but not acyl-CoA or acyl-ACP. This chain is Glycerol-3-phosphate acyltransferase, found in Phytoplasma australiense.